An 892-amino-acid polypeptide reads, in one-letter code: Smad protein daf-3 (892 aa).

Disordered regions lie at residues 1–43 (MGDH…GLED) and 135–161 (PYLD…FDTK). Over residues 15–26 (IPPQFNYSQPGT) the composition is skewed to polar residues. Residues 198–347 (KIVEYLMYYR…YEIVIGTMIV (150 aa)) form the MH1 domain. The interval 505–552 (YPDFHHPFNQQPHQPPQLSQNHTSQQGSHQPGHQGQVPNDPPISRPVL) is disordered. A compositionally biased stretch (low complexity) spans 528–540 (SQQGSHQPGHQGQ). Residues 657–880 (WGTIVYYEKN…TNCFEPLGME (224 aa)) form the MH2 domain.

It belongs to the dwarfin/SMAD family. Interacts with R-SMADs daf-8 and daf-14. Interacts with daf-14 in a daf-8 dependent manner. May interact with daf-5.

The protein localises to the cytoplasm. It localises to the nucleus. The protein resides in the chromosome. In terms of biological role, transcriptional regulator and common SMAD (co-SMAD), required to regulate entry into a developmentally arrested larval state known as dauer, in response to harsh environmental conditions. Probable component of transcriptional regulatory complex with SMAD protein daf-5. Acts antagonistically to SMAD signaling downstream of TGF-beta-like daf-7 signaling. Binds to the 5'-GTCTG-3' motif found in regulatory regions and may modulate the expression of genes involved in TGF-beta-like daf-7 and Notch lag-2 signaling. May regulate gene expression outside the dauer pathway. The protein is Smad protein daf-3 of Caenorhabditis elegans.